Here is a 409-residue protein sequence, read N- to C-terminus: Beta-arrestin-2 (409 aa).

Phosphotyrosine is present on Tyr-48. Hydroxyproline; by PHD2 occurs at positions 176 and 181. Positions Ala-240–Cys-409 are interaction with TRAF6. Ser-360 bears the Phosphoserine mark. Residues Pro-363–Cys-409 form an interaction with AP2B1 region. Phosphothreonine is present on Thr-382. The [DE]-X(1,2)-F-X-X-[FL]-X-X-X-R motif signature appears at Asp-385–Arg-395.

Belongs to the arrestin family. In terms of assembly, homooligomer; the self-association is mediated by InsP6-binding. Heterooligomer with ARRB1; the association is mediated by InsP6-binding. Interacts with ADRB2 and CHRM2. Interacts with PDE4A. Interacts with PDE4D. Interacts with MAPK10, MAPK1 and MAPK3. Interacts with DRD2. Interacts with FSHR. Interacts with CLTC. Interacts with HTR2C. Interacts with CCR5. Interacts with CXCR4. Interacts with SRC. Interacts with DUSP16; the interaction is interrupted by stimulation of AGTR1 and activation of MAPK10. Interacts with CHUK; the interaction is enhanced stimulation of ADRB2. Interacts with RELA. Interacts with MDM2; the interaction is enhanced by activation of GPCRs. Interacts with SLC9A5. Interacts with TRAF6. Interacts with IGF1R. Interacts with ENG. Interacts with KIR2DL1, KIR2DL3 and KIR2DL4. Interacts with LDLR. Interacts with AP2B1. Interacts with C5AR1. Interacts with RAF1. Interacts with MAP2K1. Interacts with MAPK1. Interacts with MAPK10; the interaction enhances MAPK10 activation by MAP3K5. Interacts with MAP2K4; the interaction is enhanced by presence of MAP3K5 and MAPK10. Interacts with MAP3K5. Interacts with AKT1. Interacts with IKBKB and MAP3K14. Interacts with SMO (activated). Interacts with GSK3A and GSK3B. Associates with protein phosphatase 2A (PP2A). Interacts with DHX8; the interaction is detected in the nucleus upon OR1D2 stimulation. Interacts with GAPDHS; the interaction is detected in the nucleus upon OR1D2 stimulation. Interacts with H2AFX; the interaction is detected in the nucleus upon OR1D2 stimulation. Interacts with KIF14; the interaction is detected in the nucleus upon OR1D2 stimulation. Interacts with RCC1; the interaction is detected in the nucleus upon OR1D2 stimulation. Interacts with CXCR4; the interaction is dependent on C-terminal phosphorylation of CXCR4 and allows activation of MAPK1 and MAPK3. Interacts with GPR143. Interacts with HCK and CXCR1 (phosphorylated). Interacts with ACKR3 and ACKR4. Interacts with ARRDC1; the interaction is direct. Interacts with GPR61, GPR62 and GPR135. Interacts (via NACHT and LRR domains) with NLRP3; this interaction is direct and inducible by omega-3 polyunsaturated fatty acids (PUFAs). Interacts with FFAR4 (via C-terminus); this interaction is stimulated by long-chain fatty acids (LCFAs). Interacts with GPR35. Interacts with GPR84. Interacts with TIGIT; this interaction inhibits the NF-kappa-B pathway. Interacts with TGFBR3. Phosphorylated at Thr-382 in the cytoplasm; probably dephosphorylated at the plasma membrane. The phosphorylation does not regulate internalization and recycling of ADRB2, interaction with clathrin or AP2B1. Post-translationally, the ubiquitination status appears to regulate the formation and trafficking of beta-arrestin-GPCR complexes and signaling. Ubiquitination appears to occur GPCR-specific. Ubiquitinated by MDM2; the ubiquitination is required for rapid internalization of ADRB2. Deubiquitinated by USP33; the deubiquitination leads to a dissociation of the beta-arrestin-GPCR complex. Stimulation of a class A GPCR, such as ADRB2, induces transient ubiquitination and subsequently promotes association with USP33. Stimulation of a class B GPCR promotes a sustained ubiquitination. Deubiquitinated by USP20; allowing USP20 to deubiquitinate TRAF6 leading to inhibition of NF-kappa-B signaling. In terms of processing, hydroxylation by PHD2 modulates the rate of internalization by slowing down recruitment to the plasma membrane and inhibiting subsequent co-internalization with class A receptors.

The protein resides in the cytoplasm. It localises to the nucleus. The protein localises to the cell membrane. Its subcellular location is the membrane. It is found in the clathrin-coated pit. The protein resides in the cytoplasmic vesicle. Functions in regulating agonist-mediated G-protein coupled receptor (GPCR) signaling by mediating both receptor desensitization and resensitization processes. During homologous desensitization, beta-arrestins bind to the GPRK-phosphorylated receptor and sterically preclude its coupling to the cognate G-protein; the binding appears to require additional receptor determinants exposed only in the active receptor conformation. The beta-arrestins target many receptors for internalization by acting as endocytic adapters (CLASPs, clathrin-associated sorting proteins) and recruiting the GPRCs to the adapter protein 2 complex 2 (AP-2) in clathrin-coated pits (CCPs). However, the extent of beta-arrestin involvement appears to vary significantly depending on the receptor, agonist and cell type. Internalized arrestin-receptor complexes traffic to intracellular endosomes, where they remain uncoupled from G-proteins. Two different modes of arrestin-mediated internalization occur. Class A receptors, like ADRB2, OPRM1, ENDRA, D1AR and ADRA1B dissociate from beta-arrestin at or near the plasma membrane and undergo rapid recycling. Class B receptors, like AVPR2, AGTR1, NTSR1, TRHR and TACR1 internalize as a complex with arrestin and traffic with it to endosomal vesicles, presumably as desensitized receptors, for extended periods of time. Receptor resensitization then requires that receptor-bound arrestin is removed so that the receptor can be dephosphorylated and returned to the plasma membrane. Mediates endocytosis of CCR7 following ligation of CCL19 but not CCL21. Involved in internalization of P2RY1, P2RY4, P2RY6 and P2RY11 and ATP-stimulated internalization of P2RY2. Involved in phosphorylation-dependent internalization of OPRD1 and subsequent recycling or degradation. Involved in ubiquitination of IGF1R. Beta-arrestins function as multivalent adapter proteins that can switch the GPCR from a G-protein signaling mode that transmits short-lived signals from the plasma membrane via small molecule second messengers and ion channels to a beta-arrestin signaling mode that transmits a distinct set of signals that are initiated as the receptor internalizes and transits the intracellular compartment. Acts as a signaling scaffold for MAPK pathways such as MAPK1/3 (ERK1/2) and MAPK10 (JNK3). ERK1/2 and JNK3 activated by the beta-arrestin scaffold are largely excluded from the nucleus and confined to cytoplasmic locations such as endocytic vesicles, also called beta-arrestin signalosomes. Acts as a signaling scaffold for the AKT1 pathway. GPCRs for which the beta-arrestin-mediated signaling relies on both ARRB1 and ARRB2 (codependent regulation) include ADRB2, F2RL1 and PTH1R. For some GPCRs the beta-arrestin-mediated signaling relies on either ARRB1 or ARRB2 and is inhibited by the other respective beta-arrestin form (reciprocal regulation). Increases ERK1/2 signaling in AGTR1- and AVPR2-mediated activation (reciprocal regulation). Involved in CCR7-mediated ERK1/2 signaling involving ligand CCL19. Is involved in type-1A angiotensin II receptor/AGTR1-mediated ERK activity. Is involved in type-1A angiotensin II receptor/AGTR1-mediated MAPK10 activity. Is involved in dopamine-stimulated AKT1 activity in the striatum by disrupting the association of AKT1 with its negative regulator PP2A. Involved in AGTR1-mediated chemotaxis. Appears to function as signaling scaffold involved in regulation of MIP-1-beta-stimulated CCR5-dependent chemotaxis. Involved in attenuation of NF-kappa-B-dependent transcription in response to GPCR or cytokine stimulation by interacting with and stabilizing CHUK. Suppresses UV-induced NF-kappa-B-dependent activation by interacting with CHUK. The function is promoted by stimulation of ADRB2 and dephosphorylation of ARRB2. Involved in p53/TP53-mediated apoptosis by regulating MDM2 and reducing the MDM2-mediated degradation of p53/TP53. May serve as nuclear messenger for GPCRs. Upon stimulation of OR1D2, may be involved in regulation of gene expression during the early processes of fertilization. Also involved in regulation of receptors other than GPCRs. Involved in endocytosis of TGFBR2 and TGFBR3 and down-regulates TGF-beta signaling such as NF-kappa-B activation. Involved in endocytosis of low-density lipoprotein receptor/LDLR. Involved in endocytosis of smoothened homolog/Smo, which also requires GRK2. Involved in endocytosis of SLC9A5. Involved in endocytosis of ENG and subsequent TGF-beta-mediated ERK activation and migration of epithelial cells. Involved in Toll-like receptor and IL-1 receptor signaling through the interaction with TRAF6 which prevents TRAF6 autoubiquitination and oligomerization required for activation of NF-kappa-B and JUN. Involved in insulin resistance by acting as insulin-induced signaling scaffold for SRC, AKT1 and INSR. Involved in regulation of inhibitory signaling of natural killer cells by recruiting PTPN6 and PTPN11 to KIR2DL1. Involved in IL8-mediated granule release in neutrophils. Involved in the internalization of the atypical chemokine receptor ACKR3. Acts as an adapter protein coupling FFAR4 receptor to specific downstream signaling pathways, as well as mediating receptor endocytosis. During the activation step of NLRP3 inflammasome, directly associates with NLRP3 leading to inhibition of pro-inflammatory cytokine release and inhibition of inflammation. The chain is Beta-arrestin-2 (ARRB2) from Homo sapiens (Human).